A 571-amino-acid polypeptide reads, in one-letter code: MRTSQYLFSTLKETPNDAQVVSHQLMLRAGMIRPLASGMYNWLPTGLRVLKKVENIIREEMNKSGALEVEMPVVQPADLWVESERWEDYGPELLRFKDRGDRPFVLGPTHEEVITDLVRREVSSYKQLPLNLYQIQTKFRDEVRPRFGVMRGREFLMKDAYSFHTSKESLQETYDVMHQTYSNIFTRLGLDFRPVAADTGSIGGSASHEFQVLAQSGEDDVVFSTESDYAANIELAEAIAVGERQAPTAEMTLVDTPNAKTIAELVEQFNLPIEKTVKTLIVKGASEEQPLVALVIRGDHELNEIKAVKCEEVAEPFEFADEAEIKAKIGAGIGSLGPVNMPIPVIIDRSVALMSDFGAGANIDGKHYFNINWERDVALPKIADLRNVVEGDPSPDGKGTLLIKRGIEVGHIFQLGTKYSEAMKATVQGEDGRPQTMIMGCYGIGVTRVVAAAIEQHHDERGIIWPTDAIAPFTVAVVPMNMHKSESVQTFAEDLYKTLRSQGVDVIFDDRKERPGVMFADMELIGVPHMLVIGEKNLENGEIEYKNRRTGEKQMIAKDQLLDFLKGRINQ.

This sequence belongs to the class-II aminoacyl-tRNA synthetase family. ProS type 1 subfamily. In terms of assembly, homodimer.

It localises to the cytoplasm. The enzyme catalyses tRNA(Pro) + L-proline + ATP = L-prolyl-tRNA(Pro) + AMP + diphosphate. Its function is as follows. Catalyzes the attachment of proline to tRNA(Pro) in a two-step reaction: proline is first activated by ATP to form Pro-AMP and then transferred to the acceptor end of tRNA(Pro). As ProRS can inadvertently accommodate and process non-cognate amino acids such as alanine and cysteine, to avoid such errors it has two additional distinct editing activities against alanine. One activity is designated as 'pretransfer' editing and involves the tRNA(Pro)-independent hydrolysis of activated Ala-AMP. The other activity is designated 'posttransfer' editing and involves deacylation of mischarged Ala-tRNA(Pro). The misacylated Cys-tRNA(Pro) is not edited by ProRS. In Glaesserella parasuis serovar 5 (strain SH0165) (Haemophilus parasuis), this protein is Proline--tRNA ligase.